The primary structure comprises 1182 residues: uncharacterized protein (1182 aa).

The chain crosses the membrane as a helical span at residues Gly618–Leu638.

It localises to the host membrane. This is an uncharacterized protein from Callospermophilus lateralis (Golden-mantled ground squirrel).